We begin with the raw amino-acid sequence, 187 residues long: Elongation factor P (187 aa).

It belongs to the elongation factor P family.

Its subcellular location is the cytoplasm. It participates in protein biosynthesis; polypeptide chain elongation. Its function is as follows. Involved in peptide bond synthesis. Stimulates efficient translation and peptide-bond synthesis on native or reconstituted 70S ribosomes in vitro. Probably functions indirectly by altering the affinity of the ribosome for aminoacyl-tRNA, thus increasing their reactivity as acceptors for peptidyl transferase. This Mycobacterium bovis (strain ATCC BAA-935 / AF2122/97) protein is Elongation factor P (efp).